Here is a 216-residue protein sequence, read N- to C-terminus: Transmembrane emp24 domain-containing protein p24delta5 (216 aa).

An N-terminal signal peptide occupies residues 1–27; it reads MAINRIAHGSLFLTVVLFFLTVNYGEA. The Lumenal segment spans residues 28–183; the sequence is IWLTIPTTGG…REVSETTNSR (156 aa). Residues 38 to 151 enclose the GOLD domain; the sequence is TKCVSEEIQS…IEGVELQLRR (114 aa). N-linked (GlcNAc...) asparagine glycosylation is present at asparagine 86. Positions 137-159 form a coiled coil; it reads AKKEKIEGVELQLRRLEGLVLSI. Arginine 169 and arginine 174 each carry omega-N-methylated arginine. The chain crosses the membrane as a helical span at residues 184 to 204; that stretch reads VAWFSIMSLGVCVVVVGSQIL. At 205–216 the chain is on the cytoplasmic side; that stretch reads YLKRYFHKKKLI. Positions 209-210 match the COPII vesicle coat-binding motif; it reads YF. Positions 209–216 match the COPI vesicle coat-binding motif; it reads YFHKKKLI.

Belongs to the EMP24/GP25L family. In terms of assembly, probably oligomerizes with other members of the EMP24/GP25L family. Associates with the COPI vesicle coat (coatomer). Associates with the COPII vesicle coat (coatomer). Interacts with p24beta2.

The protein localises to the endoplasmic reticulum membrane. Its function is as follows. Involved in vesicular protein trafficking. Mainly functions in the early secretory pathway. Thought to act as cargo receptor at the lumenal side for incorporation of secretory cargo molecules into transport vesicles and to be involved in vesicle coat formation at the cytoplasmic side. Interacts with p24beta2 at endoplasmic reticulum export sites for endoplasmic reticulum exit and coupled transport to the Golgi apparatus. Once in the Golgi, interacts very efficiently with the COPI machinery for retrograde transport back to the endoplasmic reticulum. This is Transmembrane emp24 domain-containing protein p24delta5 from Arabidopsis thaliana (Mouse-ear cress).